Here is a 342-residue protein sequence, read N- to C-terminus: Probable dual-specificity RNA methyltransferase RlmN (342 aa).

Glu-91 functions as the Proton acceptor in the catalytic mechanism. Residues Tyr-97–Glu-327 form the Radical SAM core domain. Cysteines 104 and 332 form a disulfide. [4Fe-4S] cluster is bound by residues Cys-111, Cys-115, and Cys-118. Residues Gly-158–Glu-159, Ser-190, Ser-213–His-215, and Asn-289 contribute to the S-adenosyl-L-methionine site. Residue Cys-332 is the S-methylcysteine intermediate of the active site.

This sequence belongs to the radical SAM superfamily. RlmN family. [4Fe-4S] cluster serves as cofactor.

Its subcellular location is the cytoplasm. It catalyses the reaction adenosine(2503) in 23S rRNA + 2 reduced [2Fe-2S]-[ferredoxin] + 2 S-adenosyl-L-methionine = 2-methyladenosine(2503) in 23S rRNA + 5'-deoxyadenosine + L-methionine + 2 oxidized [2Fe-2S]-[ferredoxin] + S-adenosyl-L-homocysteine. The enzyme catalyses adenosine(37) in tRNA + 2 reduced [2Fe-2S]-[ferredoxin] + 2 S-adenosyl-L-methionine = 2-methyladenosine(37) in tRNA + 5'-deoxyadenosine + L-methionine + 2 oxidized [2Fe-2S]-[ferredoxin] + S-adenosyl-L-homocysteine. Specifically methylates position 2 of adenine 2503 in 23S rRNA and position 2 of adenine 37 in tRNAs. The chain is Probable dual-specificity RNA methyltransferase RlmN from Carboxydothermus hydrogenoformans (strain ATCC BAA-161 / DSM 6008 / Z-2901).